The chain runs to 510 residues: GMP synthase [glutamine-hydrolyzing] (510 aa).

Positions 5–194 constitute a Glutamine amidotransferase type-1 domain; the sequence is DILVLDFGSQ…FAKICGCEST (190 aa). Cys-82 acts as the Nucleophile in catalysis. Catalysis depends on residues His-169 and Glu-171. Residues 195–385 form the GMPS ATP-PPase domain; the sequence is WNMGSFAKKE…LGLSRDIVYR (191 aa). An ATP-binding site is contributed by 222 to 228; that stretch reads SGGVDSS.

Homodimer.

The catalysed reaction is XMP + L-glutamine + ATP + H2O = GMP + L-glutamate + AMP + diphosphate + 2 H(+). It functions in the pathway purine metabolism; GMP biosynthesis; GMP from XMP (L-Gln route): step 1/1. Functionally, catalyzes the synthesis of GMP from XMP. The chain is GMP synthase [glutamine-hydrolyzing] from Campylobacter fetus subsp. fetus (strain 82-40).